Here is a 247-residue protein sequence, read N- to C-terminus: Uridylate kinase (247 aa).

18–21 lines the ATP pocket; the sequence is KLSG. G60 contacts UMP. Residues G61 and R65 each coordinate ATP. Residues D80 and 141 to 148 contribute to the UMP site; that span reads TGNPFFTT. Residues T168, Y174, and D177 each coordinate ATP.

This sequence belongs to the UMP kinase family. Homohexamer.

The protein localises to the cytoplasm. The enzyme catalyses UMP + ATP = UDP + ADP. It functions in the pathway pyrimidine metabolism; CTP biosynthesis via de novo pathway; UDP from UMP (UMPK route): step 1/1. Its activity is regulated as follows. Inhibited by UTP. Functionally, catalyzes the reversible phosphorylation of UMP to UDP. The protein is Uridylate kinase of Pseudomonas savastanoi pv. phaseolicola (strain 1448A / Race 6) (Pseudomonas syringae pv. phaseolicola (strain 1448A / Race 6)).